The primary structure comprises 102 residues: MSRTENIEQIEESVEAEFKQPSMYKVILNNDDYTPMDFVIEILQLFFKKDEQQATEIMLAIHHKGKGICGIYPFGIAETKVAQVNQFARQNQHPLLCSLEEA.

It belongs to the ClpS family. In terms of assembly, binds to the N-terminal domain of the chaperone ClpA.

In terms of biological role, involved in the modulation of the specificity of the ClpAP-mediated ATP-dependent protein degradation. In Shewanella halifaxensis (strain HAW-EB4), this protein is ATP-dependent Clp protease adapter protein ClpS.